The primary structure comprises 795 residues: Protocadherin beta-4 (795 aa).

The signal sequence occupies residues 1-27 (MKKLGRIHPNRQVLAFILMVFLSQVRL). Topologically, residues 28-689 (EPIRYSVLEE…SQADSLTVYL (662 aa)) are extracellular. 5 Cadherin domains span residues 34-132 (VLEE…SPVF), 137-241 (VLLK…APEF), 246-346 (YGVQ…PPEL), 351-450 (LTSS…APAF), and 455-560 (YTLF…SPFV). Asn183 is a glycosylation site (N-linked (GlcNAc...) asparagine). N-linked (GlcNAc...) asparagine glycosylation occurs at Asn417. Asn566 carries an N-linked (GlcNAc...) asparagine glycan. Residues 567–670 (GSAPCTELVP…LVDGFSQPYL (104 aa)) enclose the Cadherin 6 domain. The helical transmembrane segment at 690-710 (VVALASVSSLFLFSVLLFVAV) threads the bilayer. Residues 711–795 (RLCRRSRAAS…PKFRNSLVFS (85 aa)) lie on the Cytoplasmic side of the membrane.

It localises to the cell membrane. In terms of biological role, potential calcium-dependent cell-adhesion protein. May be involved in the establishment and maintenance of specific neuronal connections in the brain. The sequence is that of Protocadherin beta-4 (PCDHB4) from Pan troglodytes (Chimpanzee).